Here is a 546-residue protein sequence, read N- to C-terminus: MDYKKLADMLFPHITKSVSYYEDVVFPARNLSPGAKVTRLAPSPTGFIHLGNLYGAFVDERLAHQSNGVFILRIEDTDDKRKVEGAVETIISSLEFFNLKFDEGAGINGETGNYGPYFQSNRAEIYQTVAKHLVEMGRAYPCFCSEEELEEIRKQQLAENVNTGYYGKWAVHRNLTLEEVQKHLENNESFVIRFKSMGNPEETFEIDDAIRGRLSMQVNFQDIVLLKANGIPTYHFAHVVDDHLMRVTHVVRGEEWLSTLPIHYELFTTLGWDLPVYCHTAHLMKIDNGVKRKLSKRKDPELGLEYYMQLGYHPAAVREYLMTILNSNFEEWRIQNPDSDINDFPFSLNKMSNSGALFDLDKLNDVSKNVLAKIPAEEIYEFLLKWAKEYKKEIVNLLEEHKDSVIKLLSVGRNSEKPRKDLIYCEQIFEFIKYFFDEYFAIVDKYPDNVDEEEAKKILKAYLETYDHNDDQTQWFEKIKVIATENGYAAKPKDYKKNPDMYKGHVGDVSTVIRIAIVGRSSSPDLWEIQQIMGEEKVRERIQRLL.

The 'HIGH' region motif lies at 42–52 (PSPTGFIHLGN). Residues 293–297 (KLSKR) carry the 'KMSKS' region motif. K296 contributes to the ATP binding site.

The protein belongs to the class-I aminoacyl-tRNA synthetase family. Glutamate--tRNA ligase type 1 subfamily. Monomer.

It is found in the cytoplasm. The enzyme catalyses tRNA(Glu) + L-glutamate + ATP = L-glutamyl-tRNA(Glu) + AMP + diphosphate. Functionally, catalyzes the attachment of glutamate to tRNA(Glu) in a two-step reaction: glutamate is first activated by ATP to form Glu-AMP and then transferred to the acceptor end of tRNA(Glu). The chain is Glutamate--tRNA ligase from Acetivibrio thermocellus (strain ATCC 27405 / DSM 1237 / JCM 9322 / NBRC 103400 / NCIMB 10682 / NRRL B-4536 / VPI 7372) (Clostridium thermocellum).